Consider the following 177-residue polypeptide: O-acetyl-ADP-ribose deacetylase (177 aa).

The 175-residue stretch at 1–175 (MKSRIHVLQG…LYNRLLTQQG (175 aa)) folds into the Macro domain. Residues 11–12 (DI), Asn25, 33–35 (GVD), and 122–126 (STGVY) each bind substrate. The active-site Proton acceptor is Asp35.

It belongs to the MacroD-type family. YmdB subfamily. As to quaternary structure, homodimer. Interacts with RNase III.

It carries out the reaction 3''-O-acetyl-ADP-D-ribose + H2O = ADP-D-ribose + acetate + H(+). The catalysed reaction is 2''-O-acetyl-ADP-D-ribose + H2O = ADP-D-ribose + acetate + H(+). Functionally, deacetylates O-acetyl-ADP ribose to yield ADP-ribose and free acetate. Down-regulates ribonuclease 3 (RNase III) activity. Acts by interacting directly with the region of the ribonuclease that is required for dimerization/activation. The sequence is that of O-acetyl-ADP-ribose deacetylase from Escherichia fergusonii (strain ATCC 35469 / DSM 13698 / CCUG 18766 / IAM 14443 / JCM 21226 / LMG 7866 / NBRC 102419 / NCTC 12128 / CDC 0568-73).